Here is a 137-residue protein sequence, read N- to C-terminus: uncharacterized protein (137 aa).

Positions 58 to 135 constitute a Ubiquitin-like domain; sequence VHVVAKTVRP…EVNLQMFLMN (78 aa).

The protein localises to the cytoplasm. The protein resides in the nucleus. This is an uncharacterized protein from Schizosaccharomyces pombe (strain 972 / ATCC 24843) (Fission yeast).